A 414-amino-acid polypeptide reads, in one-letter code: ATP-dependent Clp protease ATP-binding subunit ClpX (414 aa).

Residues 1 to 51 (MADSKTKKKCSFCGRSENEVGFLITGMNGYICDSCATQAYEITQEALGEGR) form the ClpX-type ZB domain. The Zn(2+) site is built by Cys10, Cys13, Cys32, and Cys35. An ATP-binding site is contributed by 120-127 (STGTGKTL).

Belongs to the ClpX chaperone family. Component of the ClpX-ClpP complex. Forms a hexameric ring that, in the presence of ATP, binds to fourteen ClpP subunits assembled into a disk-like structure with a central cavity, resembling the structure of eukaryotic proteasomes.

Functionally, ATP-dependent specificity component of the Clp protease. It directs the protease to specific substrates. Can perform chaperone functions in the absence of ClpP. This chain is ATP-dependent Clp protease ATP-binding subunit ClpX, found in Bacteroides thetaiotaomicron (strain ATCC 29148 / DSM 2079 / JCM 5827 / CCUG 10774 / NCTC 10582 / VPI-5482 / E50).